Consider the following 148-residue polypeptide: Ribosome maturation factor RimP (148 aa).

The protein belongs to the RimP family.

It localises to the cytoplasm. Its function is as follows. Required for maturation of 30S ribosomal subunits. This is Ribosome maturation factor RimP from Nautilia profundicola (strain ATCC BAA-1463 / DSM 18972 / AmH).